The following is a 1522-amino-acid chain: Adhesion G protein-coupled receptor B3 (1522 aa).

Residues methionine 1 to alanine 25 form the signal peptide. Residues glutamine 26–threonine 880 are Extracellular-facing. A CUB domain is found at cysteine 30 to asparagine 159. N-linked (GlcNAc...) asparagine glycans are attached at residues asparagine 51, asparagine 54, asparagine 82, asparagine 105, and asparagine 241. 4 consecutive TSP type-1 domains span residues glutamate 291 to proline 343, histidine 345 to proline 398, aspartate 400 to threonine 453, and asparagine 455 to proline 508. 14 cysteine pairs are disulfide-bonded: cysteine 303–cysteine 336, cysteine 307–cysteine 342, cysteine 318–cysteine 326, cysteine 357–cysteine 392, cysteine 361–cysteine 397, cysteine 372–cysteine 382, cysteine 412–cysteine 447, cysteine 416–cysteine 452, cysteine 427–cysteine 437, cysteine 467–cysteine 502, cysteine 471–cysteine 507, cysteine 482–cysteine 492, cysteine 514–cysteine 549, and cysteine 537–cysteine 567. N-linked (GlcNAc...) asparagine glycosylation is present at asparagine 337. Residue asparagine 418 is glycosylated (N-linked (GlcNAc...) asparagine). Residue asparagine 540 is glycosylated (N-linked (GlcNAc...) asparagine). A Phosphoserine modification is found at serine 619. 4 N-linked (GlcNAc...) asparagine glycosylation sites follow: asparagine 625, asparagine 779, asparagine 812, and asparagine 828. One can recognise a GAIN-B domain in the interval glutamine 693–isoleucine 869. Disulfide bonds link cysteine 819–cysteine 851 and cysteine 839–cysteine 853. Residues cysteine 819–isoleucine 869 form a GPS region. Residues leucine 881 to alanine 901 traverse the membrane as a helical segment. The Cytoplasmic segment spans residues leucine 902–arginine 910. A helical transmembrane segment spans residues serine 911–glycine 931. Topologically, residues glutamine 932–serine 939 are extracellular. Asparagine 937 carries N-linked (GlcNAc...) asparagine glycosylation. A helical transmembrane segment spans residues isoleucine 940–leucine 960. At threonine 961 to lysine 981 the chain is on the cytoplasmic side. A helical transmembrane segment spans residues arginine 982–threonine 1002. At arginine 1003–tyrosine 1023 the chain is on the extracellular side. The chain crosses the membrane as a helical span at residues alanine 1024–phenylalanine 1044. Topologically, residues asparagine 1045 to serine 1098 are cytoplasmic. The helical transmembrane segment at leucine 1099–alanine 1119 threads the bilayer. Topologically, residues methionine 1120–serine 1125 are extracellular. A helical transmembrane segment spans residues isoleucine 1126–valine 1146. The Cytoplasmic portion of the chain corresponds to histidine 1147–valine 1522. 2 positions are modified to phosphoserine: serine 1220 and serine 1411.

It belongs to the G-protein coupled receptor 2 family. Adhesion G-protein coupled receptor (ADGR) subfamily. As to quaternary structure, forms a heterodimer, consisting of a large extracellular region non-covalently linked to a seven-transmembrane moiety. Interacts (via its TSRs) with C1QL1, C1QL2, C1QL3 and C1QL4. Interacts via (C-terminus) with ELMO1, ELMO2 and ELMO3. In terms of processing, the endogenous protein is proteolytically cleaved into 2 subunits, an extracellular subunit and a seven-transmembrane subunit. As to expression, brain-specific expression.

The protein localises to the cell membrane. In terms of biological role, receptor that plays a role in the regulation of synaptogenesis and dendritic spine formation at least partly via interaction with ELMO1 and RAC1 activity. Promotes myoblast fusion through ELMO/DOCK1. This chain is Adhesion G protein-coupled receptor B3 (Adgrb3), found in Mus musculus (Mouse).